The sequence spans 200 residues: Mediator of RNA polymerase II transcription subunit 22 (200 aa).

Residues 93–122 (SVNEAIDQRNQQLRTLQEECDRKLITLRDE) adopt a coiled-coil conformation. The tract at residues 166 to 200 (LSAPLLASPEPSAGPLQVAAPAHSHAGGPGPTEHA) is disordered.

Belongs to the Mediator complex subunit 22 family. As to quaternary structure, component of the Mediator complex, which is composed of MED1, MED4, MED6, MED7, MED8, MED9, MED10, MED11, MED12, MED13, MED13L, MED14, MED15, MED16, MED17, MED18, MED19, MED20, MED21, MED22, MED23, MED24, MED25, MED26, MED27, MED29, MED30, MED31, CCNC, CDK8 and CDC2L6/CDK11. The MED12, MED13, CCNC and CDK8 subunits form a distinct module termed the CDK8 module. Mediator containing the CDK8 module is less active than Mediator lacking this module in supporting transcriptional activation. Individual preparations of the Mediator complex lacking one or more distinct subunits have been variously termed ARC, CRSP, DRIP, PC2, SMCC and TRAP.

Its subcellular location is the nucleus. In terms of biological role, component of the Mediator complex, a coactivator involved in the regulated transcription of nearly all RNA polymerase II-dependent genes. Mediator functions as a bridge to convey information from gene-specific regulatory proteins to the basal RNA polymerase II transcription machinery. Mediator is recruited to promoters by direct interactions with regulatory proteins and serves as a scaffold for the assembly of a functional preinitiation complex with RNA polymerase II and the general transcription factors. The sequence is that of Mediator of RNA polymerase II transcription subunit 22 (MED22) from Homo sapiens (Human).